A 231-amino-acid chain; its full sequence is Endonuclease NucS (231 aa).

This sequence belongs to the NucS endonuclease family.

It localises to the cytoplasm. Its function is as follows. Cleaves both 3' and 5' ssDNA extremities of branched DNA structures. The protein is Endonuclease NucS of Kocuria rhizophila (strain ATCC 9341 / DSM 348 / NBRC 103217 / DC2201).